The primary structure comprises 142 residues: UPF0305 protein MK0666 (142 aa).

It belongs to the UPF0305 family.

The sequence is that of UPF0305 protein MK0666 from Methanopyrus kandleri (strain AV19 / DSM 6324 / JCM 9639 / NBRC 100938).